The chain runs to 453 residues: Growth/differentiation factor 9 (453 aa).

The N-terminal stretch at 1 to 27 (MALPNKFFLWFCCFAWLCFPISLDSLP) is a signal peptide. A propeptide spanning residues 28 to 318 (SRGEAQIVAR…EGVRSSRHRR (291 aa)) is cleaved from the precursor. Residues N163, N236, N255, and N269 are each glycosylated (N-linked (GlcNAc...) asparagine). Positions 282–328 (LHPKRKPSQGPDQRRELSAYPVGEEAAEGVRSSRHRRDQESVSSELK) are disordered. A compositionally biased stretch (basic and acidic residues) spans 318-328 (RDQESVSSELK). Residue N337 is glycosylated (N-linked (GlcNAc...) asparagine). 3 cysteine pairs are disulfide-bonded: C352–C418, C381–C450, and C385–C452.

The protein belongs to the TGF-beta family. In terms of assembly, homodimer or heterodimer (Potential). But, in contrast to other members of this family, cannot be disulfide-linked. Post-translationally, phosphorylated; phosphorylation is critical for GDF9 function.

It is found in the secreted. Its function is as follows. Required for ovarian folliculogenesis. The chain is Growth/differentiation factor 9 (GDF9) from Capra hircus (Goat).